Consider the following 154-residue polypeptide: MENVPGSFGTSASFALRFGQTIFSAASLIFMCFDYDFYDFTTFCYLATVMAIVTPWSILLALTDTYSVLVKLLPQELRVLSIVFAGDFVLSFLSLGGACAVASATELLASADGKICDGNLCIQYQVSAALAFLCWFLLLASALFNFWSLPSLYY.

Residues 1–12 (MENVPGSFGTSA) are Cytoplasmic-facing. The chain crosses the membrane as a helical span at residues 13 to 33 (SFALRFGQTIFSAASLIFMCF). Residues 34-41 (DYDFYDFT) are Extracellular-facing. The chain crosses the membrane as a helical span at residues 42–62 (TFCYLATVMAIVTPWSILLAL). Residues 63–81 (TDTYSVLVKLLPQELRVLS) are Cytoplasmic-facing. A helical transmembrane segment spans residues 82-102 (IVFAGDFVLSFLSLGGACAVA). Residues 103–128 (SATELLASADGKICDGNLCIQYQVSA) lie on the Extracellular side of the membrane. A helical membrane pass occupies residues 129–149 (ALAFLCWFLLLASALFNFWSL). The Cytoplasmic portion of the chain corresponds to 150 to 154 (PSLYY).

It belongs to the Casparian strip membrane proteins (CASP) family. Homodimer and heterodimers.

It localises to the cell membrane. The protein is CASP-like protein ARALYDRAFT_485429 of Arabidopsis lyrata subsp. lyrata (Lyre-leaved rock-cress).